The primary structure comprises 465 residues: MESLRIYNTLARDKQDFVPRQPGEVRMYVCGITVYDYCHIGHARMVVVFDIVQRWLRAAGYRVTYVRNITDIDDKIIRRALENGETIQSLTRRFIDAMNADFDALGVERPDIEPRATDFIPQMLGMIEKLEANGYAYQAKDGDVNYSVRKFANYGKLSGKSLEDLRAGERVAAKDAKDDPLDFVLWKRAKPEEPAGASWESKYGAGRPGWHIECSAMGCTLLGEHFDIHGGGQDLQFPHHENEIAQSEGATGQTFVNYWMHNGFVQVDSEKMSKSLGNFFTIREVLEKYDAEVVRFFIVRTHYRSPLNYSDVHLDDARASLTRLYTALKDVTPDAAPLDWSEAHAQRFAAAMNDDFNTAVAVAVLFELATEVNRTREPALARQLKRLAGLLGLLGREPREFLQQAAGAARTGALEPDEIEARIAARVAAKQAKNYAEADRIRAELLEAGIALEDKPGGSTEWRRV.

Cysteine 30 contacts Zn(2+). Positions 32 to 42 match the 'HIGH' region motif; the sequence is ITVYDYCHIGH. Zn(2+) contacts are provided by cysteine 214, histidine 239, and glutamate 243. A 'KMSKS' region motif is present at residues 271 to 275; sequence KMSKS. Lysine 274 contacts ATP.

This sequence belongs to the class-I aminoacyl-tRNA synthetase family. In terms of assembly, monomer. Requires Zn(2+) as cofactor.

The protein localises to the cytoplasm. It catalyses the reaction tRNA(Cys) + L-cysteine + ATP = L-cysteinyl-tRNA(Cys) + AMP + diphosphate. The sequence is that of Cysteine--tRNA ligase from Burkholderia thailandensis (strain ATCC 700388 / DSM 13276 / CCUG 48851 / CIP 106301 / E264).